Consider the following 114-residue polypeptide: Notch-regulated ankyrin repeat-containing protein (114 aa).

ANK repeat units follow at residues 50–79 (EGQT…DIRL) and 83–112 (DGWS…YSSS).

The protein belongs to the NRARP family. Forms a ternary complex with the intracellular domain (ICD) of notch1 and rbpj/suh.

Its function is as follows. Promotes loss of intracellular domain (ICD) of Notch1 in embryos. By down-regulating ICD levels, could function as a negative feedback regulator of Notch signaling that attenuates ICD-mediated transcription. Involved in angiogenesis. May be involved in somitogenesis. This Xenopus laevis (African clawed frog) protein is Notch-regulated ankyrin repeat-containing protein (nrarp).